A 580-amino-acid chain; its full sequence is F-box only protein 24 (580 aa).

In terms of domain architecture, F-box spans 36–82; sequence PISIQLFPPELVEHIISFLPVRDLVALGQTCRYFHEVCDAEGVWRRI. The stretch at 376–425 is one RCC1 repeat; it reads GRIFMQGNNRYGQLGTGDKMDRGEPTQVRYLQRPITLWCGLNHSLVLSQS.

In terms of assembly, directly interacts with SKP1 and CUL1.

Substrate-recognition component of the SCF (SKP1-CUL1-F-box protein)-type E3 ubiquitin ligase complex. The polypeptide is F-box only protein 24 (FBXO24) (Macaca fascicularis (Crab-eating macaque)).